A 431-amino-acid chain; its full sequence is Mediator of RNA polymerase II transcription subunit 2 (431 aa).

The residue at position 6 (S6) is a Phosphoserine. Residues G105 to L140 are compositionally biased toward basic and acidic residues. The interval G105–K178 is disordered. Positions A143–N152 are enriched in low complexity. Over residues N162–K178 the composition is skewed to polar residues. Position 208 is a phosphoserine; by CDK8 (S208). Residues N284–G399 form a disordered region. The span at N304 to N313 shows a compositional bias: basic and acidic residues. Over residues N318–N365 the composition is skewed to low complexity. The segment covering S366–S387 has biased composition (polar residues).

Belongs to the mediator complex subunit 2 family. In terms of assembly, component of the Mediator complex, which is composed of at least 21 subunits that form three structurally distinct submodules. The Mediator head module contains MED6, MED8, MED11, SRB4/MED17, SRB5/MED18, ROX3/MED19, SRB2/MED20 and SRB6/MED22, the middle module contains MED1, MED4, NUT1/MED5, MED7, CSE2/MED9, NUT2/MED10, SRB7/MED21 and SOH1/MED31, and the tail module contains MED2, PGD1/MED3, RGR1/MED14, GAL11/MED15 and SIN4/MED16. The head and the middle modules interact directly with RNA polymerase II, whereas the elongated tail module interacts with gene-specific regulatory proteins.

It localises to the nucleus. Component of the Mediator complex, a coactivator involved in the regulated transcription of nearly all RNA polymerase II-dependent genes. Mediator functions as a bridge to convey information from gene-specific regulatory proteins to the basal RNA polymerase II transcription machinery. The Mediator complex, having a compact conformation in its free form, is recruited to promoters by direct interactions with regulatory proteins and serves for the assembly of a functional preinitiation complex with RNA polymerase II and the general transcription factors. The Mediator complex unfolds to an extended conformation and partially surrounds RNA polymerase II, specifically interacting with the unphosphorylated form of the C-terminal domain (CTD) of RNA polymerase II. The Mediator complex dissociates from the RNA polymerase II holoenzyme and stays at the promoter when transcriptional elongation begins. This chain is Mediator of RNA polymerase II transcription subunit 2 (MED2), found in Saccharomyces cerevisiae (strain ATCC 204508 / S288c) (Baker's yeast).